The following is a 120-amino-acid chain: Large ribosomal subunit protein bL20 (120 aa).

This sequence belongs to the bacterial ribosomal protein bL20 family.

Binds directly to 23S ribosomal RNA and is necessary for the in vitro assembly process of the 50S ribosomal subunit. It is not involved in the protein synthesizing functions of that subunit. The chain is Large ribosomal subunit protein bL20 from Baumannia cicadellinicola subsp. Homalodisca coagulata.